Reading from the N-terminus, the 423-residue chain is WD repeat and SOCS box-containing protein 1 (423 aa).

Residues 76-100 (DRSSGAGPRRLSRQNSEGSLLPGEP) are disordered. WD repeat units follow at residues 125 to 166 (SRCV…LLLN), 169 to 209 (DHTD…NMVK), 213 to 252 (GHQNWVYCSAFSPDSSVLCSVGAGKAVFLWDMDKYTLIRK), 255 to 294 (GHHNDVVCCEFSPDGALLATASYDTRVIVWDPHTATVLLE), and 310 to 347 (ANDRWVRSVAFCHDGRHIASVTDDRLVRFWSIDEKSPQ). The SOCS box domain maps to 373–423 (DGSVHFWASPRSIASLQHLCRMTLRRVMPTQQVYTLPIPFSMQDYLAYKTL).

As to quaternary structure, component of a probable ECS E3 ubiquitin-protein ligase complex that contains the Elongin BC complex.

It participates in protein modification; protein ubiquitination. In terms of biological role, probable substrate-recognition component of a SCF-like ECS (Elongin-Cullin-SOCS-box protein) E3 ubiquitin-protein ligase complex which mediates the ubiquitination and subsequent proteasomal degradation of target proteins. The polypeptide is WD repeat and SOCS box-containing protein 1 (wsb1) (Danio rerio (Zebrafish)).